A 166-amino-acid chain; its full sequence is Twist-related protein (166 aa).

Positions 1-18 are enriched in low complexity; it reads MMQEESSSPVSPVDSLSN. Residues 1-83 form a disordered region; sequence MMQEESSSPV…RVMANVRERQ (83 aa). Basic residues predominate over residues 28–39; the sequence is SKRGCRKRRSAR. Residues 57-75 show a composition bias toward polar residues; it reads ASSTGSSPQSFEELQSQRV. The bHLH domain occupies 72-123; the sequence is SQRVMANVRERQRTQSLNEAFSSLRKIIPTLPSDKLSKIQTLKLASRYIDFL.

In terms of assembly, efficient DNA binding requires dimerization with another bHLH protein. Homodimer. Subset of mesodermal cells.

It localises to the nucleus. In terms of biological role, probable transcription factor, which may be involved, with other proteins, in establishing the pattern of cell type-specific gene expression in mesodermal cell subgroups. The protein is Twist-related protein (twist1) of Xenopus laevis (African clawed frog).